A 947-amino-acid polypeptide reads, in one-letter code: MLQRAASNAYSWWWASHIRTKQSKWLEQNLQDIEEKVQYVLKLLQEDGDSFAKRAEMYYKKRPELISFVEESYRAYRALAERYDHISTELQNANTTIASVFPDQVPNFAMDDDIDMSKFAKRSNISGANVPNVPKLPVKDLKSAVRVATKKLQPRKSMKYTGGSTNVVVKSSGLSKPEAMGEIDKLQKEILALQTEKEFVKSSYEIGLSKYWEFEKGIKEKQERICGLQDEFGESVAIEDEEARRLMTETAIKSCQEKLVELQEKQEKSYEEAREEHVKIKESKEKLRSMASQFLGDESVFAKDDGDEVRRTAELDHEIKEMSRKKKELESVKEKIREHFESGANSSLNGTDMAEKVDELVNKVISLESAVSSQTALIQRLRNETNGLQTQISTLETDKALLADDKSDLRNKLKEMEEKLKALQDLDRNVLDKSSNLQTHFDDACHNLDNLSGGNLHEVKPESESDNLAISIEPQKDLEGEKRTLDISEEIKEHQKETGEEKKEAPVKSVKFEQTRNATIAEDSTIPSTNPDTVLESTEKVDSDLEKQDASDKTDSVLDNVLENQAASDQTDSVLDSVLEKQGESDKIDSVPSNVSEKESDISFNGEQQEDQKEKEGEPDWKEMFMKGMENREKHLLTEYTTILRNFKDMKKTLDETKTKMKTENATKDDEIKLLREKMSLLQKGLGDSNDLMENQLSNDDYSIGFMAAENQNMSLVEEQFRLNIDELLEENLDFWLRFSTAFGQIQSYDTSIEDLQAEISKLEQRRKQDGSSTAKYALRSDVRPLYVHLREINTDLGLWLEKGAALKEELKSRFESLCNIQDEITKALKSSAEDDDFRFTSYQAAKFQGEVLNMKQENNKVADELQAGLDHITTLQLEVDKTLGKLIDEFALSGSKNKSDLDLQHSDSRSRVPLRSFIFGSKQKRAKPSIFSCMHPSLYRKMKTST.

An NAB domain is found at 10–90; the sequence is YSWWWASHIR…ERYDHISTEL (81 aa). Coiled-coil stretches lie at residues 176–205, 247–342, and 375–433; these read KPEA…SSYE, MTET…HFES, and TALI…VLDK. 2 disordered regions span residues 455-555 and 580-620; these read NLHE…DKTD and EKQG…GEPD. Positions 474-514 are enriched in basic and acidic residues; that stretch reads PQKDLEGEKRTLDISEEIKEHQKETGEEKKEAPVKSVKFEQ. Polar residues predominate over residues 525-536; sequence TIPSTNPDTVLE. 3 stretches are compositionally biased toward basic and acidic residues: residues 537–555, 580–589, and 610–620; these read STEK…DKTD, EKQGESDKID, and EDQKEKEGEPD. 2 coiled-coil regions span residues 645–684 and 744–773; these read RNFK…LLQK and GQIQ…DGSS.

The protein belongs to the NET family.

Plant-specific actin binding protein. May be part of a membrane-cytoskeletal adapter complex. In Arabidopsis thaliana (Mouse-ear cress), this protein is Protein NETWORKED 2D.